Reading from the N-terminus, the 351-residue chain is Alcohol dehydrogenase 2 (351 aa).

Positions 47, 70, 101, 104, 107, 115, and 157 each coordinate Zn(2+). NAD(+) is bound by residues 181–187 (GAGGGLG), aspartate 205, lysine 209, 271–273 (VGL), and arginine 343.

It belongs to the zinc-containing alcohol dehydrogenase family. As to quaternary structure, homotetramer. Zn(2+) is required as a cofactor.

It catalyses the reaction a primary alcohol + NAD(+) = an aldehyde + NADH + H(+). It carries out the reaction a secondary alcohol + NAD(+) = a ketone + NADH + H(+). The chain is Alcohol dehydrogenase 2 (sodh-2) from Caenorhabditis elegans.